A 430-amino-acid polypeptide reads, in one-letter code: MIOREX complex component 4 (430 aa).

Residues 1 to 27 (MTVLYTSASLKKMKCLAFNMGMNCVRT) constitute a mitochondrion transit peptide. A helical transmembrane segment spans residues 403–420 (FLISLSALLASFFAYYRY).

Associates with the mitochondrial ribosome.

The protein resides in the mitochondrion. It localises to the mitochondrion membrane. Component of MIOREX complexes, large expressome-like assemblies of ribosomes with factors involved in all the steps of post-transcriptional gene expression. The polypeptide is MIOREX complex component 4 (Saccharomyces cerevisiae (strain ATCC 204508 / S288c) (Baker's yeast)).